The chain runs to 837 residues: Protein translocase subunit SecA (837 aa).

ATP-binding positions include Q85, 103–107 (GEGKT), and D493. Zn(2+)-binding residues include C821, C823, C832, and H833.

The protein belongs to the SecA family. In terms of assembly, monomer and homodimer. Part of the essential Sec protein translocation apparatus which comprises SecA, SecYEG and auxiliary proteins SecDF. Other proteins may also be involved. The cofactor is Zn(2+).

The protein localises to the cell membrane. It localises to the cytoplasm. It carries out the reaction ATP + H2O + cellular proteinSide 1 = ADP + phosphate + cellular proteinSide 2.. Functionally, part of the Sec protein translocase complex. Interacts with the SecYEG preprotein conducting channel. Has a central role in coupling the hydrolysis of ATP to the transfer of proteins into and across the cell membrane, serving as an ATP-driven molecular motor driving the stepwise translocation of polypeptide chains across the membrane. The polypeptide is Protein translocase subunit SecA (Streptococcus pneumoniae (strain Taiwan19F-14)).